The primary structure comprises 199 residues: Calcium-binding protein CAST (199 aa).

The segment covering 1 to 13 (MGSVQDENKDEFK) has biased composition (basic and acidic residues). Positions 1–31 (MGSVQDENKDEFKQSLTRGKLKPSSSSSFRL) are disordered. EF-hand domains are found at residues 36–71 (LNSI…LGLD), 75–110 (SEIE…VFFG), 125–160 (QDES…LGLP), and 163–198 (SEID…VIVP). Positions 49, 51, 53, and 60 each coordinate Ca(2+). The Ca(2+) site is built by aspartate 138, asparagine 140, aspartate 142, glutamate 149, aspartate 178, aspartate 180, arginine 182, and glutamate 187.

Its function is as follows. Not known. Probably binds 3 calcium ions. This is Calcium-binding protein CAST from Solanum tuberosum (Potato).